A 1058-amino-acid polypeptide reads, in one-letter code: Ubiquitin-like modifier-activating enzyme 1 (1058 aa).

Positions 1–47 (MSSSPLSKKRRVSGPDPKPGSNCSPAQSVLSEVPSVPTNGMAKNGSE) are disordered. Serine 2 bears the N-acetylserine mark. At serine 2 the chain carries N-acetylalanine. Residue serine 4 is modified to Phosphoserine. The short motif at 5–11 (PLSKKRR) is the Nuclear localization signal element. Serine 13, serine 21, serine 24, and serine 46 each carry phosphoserine. Polar residues predominate over residues 21–30 (SNCSPAQSVL). Phosphotyrosine is present on tyrosine 55. Tandem repeats lie at residues 63–199 (GHEA…GQLF) and 459–611 (GSDL…QVVI). A 2 approximate repeats region spans residues 63–611 (GHEAMKRLQT…GTKGNVQVVI (549 aa)). ATP contacts are provided by residues alanine 478, aspartate 504, arginine 515, lysine 528, and 576–577 (DN). Lysine 528 carries the post-translational modification N6-succinyllysine. Cysteine 632 (glycyl thioester intermediate) is an active-site residue. Lysine 671 is modified (N6-acetyllysine). Threonine 800 is subject to Phosphothreonine. 4 positions are modified to phosphoserine: serine 810, serine 816, serine 820, and serine 835. N6-acetyllysine is present on lysine 980.

Belongs to the ubiquitin-activating E1 family. As to quaternary structure, monomer. Interacts with GAN (via BTB domain). In terms of processing, ISGylated. Detected in erythrocytes (at protein level). Ubiquitous.

The protein localises to the cytoplasm. It is found in the mitochondrion. The protein resides in the nucleus. It carries out the reaction ATP + ubiquitin + [E1 ubiquitin-activating enzyme]-L-cysteine = AMP + diphosphate + S-ubiquitinyl-[E1 ubiquitin-activating enzyme]-L-cysteine.. It functions in the pathway protein modification; protein ubiquitination. In terms of biological role, catalyzes the first step in ubiquitin conjugation to mark cellular proteins for degradation through the ubiquitin-proteasome system. Activates ubiquitin by first adenylating its C-terminal glycine residue with ATP, and thereafter linking this residue to the side chain of a cysteine residue in E1, yielding a ubiquitin-E1 thioester and free AMP. Essential for the formation of radiation-induced foci, timely DNA repair and for response to replication stress. Promotes the recruitment of TP53BP1 and BRCA1 at DNA damage sites. This Homo sapiens (Human) protein is Ubiquitin-like modifier-activating enzyme 1 (UBA1).